The sequence spans 258 residues: Ribonuclease HII (258 aa).

Residues 1 to 20 (MRVAPSGGPPHHHAMIRATP) form a disordered region. Basic residues predominate over residues 10–20 (PHHHAMIRATP). The region spanning 48 to 236 (WPVAGCDEVG…VVAARERHRA (189 aa)) is the RNase H type-2 domain. Aspartate 54, glutamate 55, and aspartate 145 together coordinate a divalent metal cation.

The protein belongs to the RNase HII family. Requires Mn(2+) as cofactor. Mg(2+) serves as cofactor.

The protein localises to the cytoplasm. The enzyme catalyses Endonucleolytic cleavage to 5'-phosphomonoester.. Endonuclease that specifically degrades the RNA of RNA-DNA hybrids. In Nitrobacter winogradskyi (strain ATCC 25391 / DSM 10237 / CIP 104748 / NCIMB 11846 / Nb-255), this protein is Ribonuclease HII.